A 135-amino-acid chain; its full sequence is Large-conductance mechanosensitive channel (135 aa).

Transmembrane regions (helical) follow at residues 10–30 (FAMRGNVVDLAVGVIIGAAFG) and 76–96 (GVFIQNVFDFVIVAFAIFLAI).

This sequence belongs to the MscL family. As to quaternary structure, homopentamer.

It is found in the cell inner membrane. Functionally, channel that opens in response to stretch forces in the membrane lipid bilayer. May participate in the regulation of osmotic pressure changes within the cell. The chain is Large-conductance mechanosensitive channel from Cronobacter sakazakii (strain ATCC BAA-894) (Enterobacter sakazakii).